Here is a 348-residue protein sequence, read N- to C-terminus: Anthranilate phosphoribosyltransferase (348 aa).

5-phospho-alpha-D-ribose 1-diphosphate contacts are provided by residues G81, 84–85, T89, 91–94, 109–117, and S121; these read GD, NIST, and KHGNRAMSS. G81 is an anthranilate binding site. S93 lines the Mg(2+) pocket. N112 is an anthranilate binding site. Position 167 (R167) interacts with anthranilate. 2 residues coordinate Mg(2+): D226 and E227.

It belongs to the anthranilate phosphoribosyltransferase family. As to quaternary structure, homodimer. Mg(2+) serves as cofactor.

It catalyses the reaction N-(5-phospho-beta-D-ribosyl)anthranilate + diphosphate = 5-phospho-alpha-D-ribose 1-diphosphate + anthranilate. It participates in amino-acid biosynthesis; L-tryptophan biosynthesis; L-tryptophan from chorismate: step 2/5. Functionally, catalyzes the transfer of the phosphoribosyl group of 5-phosphorylribose-1-pyrophosphate (PRPP) to anthranilate to yield N-(5'-phosphoribosyl)-anthranilate (PRA). In Thermomicrobium roseum (strain ATCC 27502 / DSM 5159 / P-2), this protein is Anthranilate phosphoribosyltransferase.